The following is a 650-amino-acid chain: Chaperone protein DnaK (650 aa).

The residue at position 200 (Thr-200) is a Phosphothreonine; by autocatalysis.

The protein belongs to the heat shock protein 70 family.

Functionally, acts as a chaperone. In Burkholderia orbicola (strain MC0-3), this protein is Chaperone protein DnaK.